The chain runs to 153 residues: uncharacterized protein (153 aa).

This is an uncharacterized protein from Escherichia coli (strain K12).